We begin with the raw amino-acid sequence, 301 residues long: Putative S-adenosyl-L-methionine-dependent methyltransferase BCG_0775c (301 aa).

Residues Asp-130 and 159–160 (DL) contribute to the S-adenosyl-L-methionine site.

This sequence belongs to the UPF0677 family.

In terms of biological role, exhibits S-adenosyl-L-methionine-dependent methyltransferase activity. The chain is Putative S-adenosyl-L-methionine-dependent methyltransferase BCG_0775c from Mycobacterium bovis (strain BCG / Pasteur 1173P2).